The primary structure comprises 151 residues: Deoxyuridine 5'-triphosphate nucleotidohydrolase (151 aa).

Residues 70 to 72 (RSG), Asn83, 87 to 89 (LID), and Met97 contribute to the substrate site.

The protein belongs to the dUTPase family. Mg(2+) is required as a cofactor.

The enzyme catalyses dUTP + H2O = dUMP + diphosphate + H(+). Its pathway is pyrimidine metabolism; dUMP biosynthesis; dUMP from dCTP (dUTP route): step 2/2. Its function is as follows. This enzyme is involved in nucleotide metabolism: it produces dUMP, the immediate precursor of thymidine nucleotides and it decreases the intracellular concentration of dUTP so that uracil cannot be incorporated into DNA. In Tolumonas auensis (strain DSM 9187 / NBRC 110442 / TA 4), this protein is Deoxyuridine 5'-triphosphate nucleotidohydrolase.